Reading from the N-terminus, the 227-residue chain is Ribonuclease 3 (227 aa).

The region spanning 4–133 is the RNase III domain; sequence FETLEKLLSY…LIAAIYLDSN (130 aa). Mg(2+) is bound at residue E46. D50 is a catalytic residue. Positions 119 and 122 each coordinate Mg(2+). The active site involves E122. Residues 158–226 enclose the DRBM domain; sequence DPKTALQEWA…ARSLLHRLKN (69 aa).

Belongs to the ribonuclease III family. Homodimer. The cofactor is Mg(2+).

Its subcellular location is the cytoplasm. It carries out the reaction Endonucleolytic cleavage to 5'-phosphomonoester.. Its function is as follows. Digests double-stranded RNA. Involved in the processing of primary rRNA transcript to yield the immediate precursors to the large and small rRNAs (23S and 16S). Processes some mRNAs, and tRNAs when they are encoded in the rRNA operon. Processes pre-crRNA and tracrRNA of type II CRISPR loci if present in the organism. The chain is Ribonuclease 3 from Rickettsia massiliae (strain Mtu5).